A 794-amino-acid polypeptide reads, in one-letter code: Ubiquitin carboxyl-terminal hydrolase 10 (794 aa).

A2 carries the post-translational modification N-acetylalanine. Residues 2–99 (ALHNPQYIFG…ILGCPTSKKT (98 aa)) are interaction with p53/TP53. The interval 6-21 (PQYIFGDFSPDEFNQF) is G3BP1-binding. A phosphothreonine mark is found at T24 and T99. Positions 123–164 (ESSSNAEAETLENDSGAGGLGQRERKKKKKRPPGYYSYLKDG) are disordered. Phosphoserine is present on residues S209, S224, and S316. A disordered region spans residues 303-326 (ESADLDPAKPESQSPPAESALSVS). Over residues 313–326 (ESQSPPAESALSVS) the composition is skewed to polar residues. At S332 the chain carries Phosphoserine; by ATM. S361 and S366 each carry phosphoserine. The USP domain occupies 411–791 (RGLINKGNWC…TAYLLYYRRV (381 aa)). C420 functions as the Nucleophile in the catalytic mechanism. S543 carries the phosphoserine modification. Residues 546 to 588 (HEKHSVSNGPGSHLIEDEELEDTGEGSEDEWEQVGPKNKTSVT) form a disordered region. Over residues 561 to 577 (EDEELEDTGEGSEDEWE) the composition is skewed to acidic residues. T568 bears the Phosphothreonine mark. Position 572 is a phosphoserine (S572). The active-site Proton acceptor is H745.

Belongs to the peptidase C19 family. USP10 subfamily. In terms of assembly, found in a deubiquitination complex with TANK, USP10 and ZC3H12A; this complex inhibits genotoxic stress- or interleukin-1-beta (IL1B)-mediated NF-kappa-B activation by promoting IKBKG or TRAF6 deubiquitination. Interacts with IKBKG; this interaction increases in response to DNA damage. Interacts with TANK; this interaction increases in response to DNA damage. Interacts with TRAF6; this interaction increases in response to DNA damage. Interacts with ZC3H12A; this interaction increases in response to DNA damage. Interacts with G3BP1 (via NTF2 domain) and G3BP2 (via NTF2 domain); inhibiting stress granule formation. Phosphorylated by ATM following DNA damage, leading to stabilization and translocation it to the nucleus. Post-translationally, ubiquitinated. Deubiquitinated by USP13.

The protein resides in the cytoplasm. It localises to the nucleus. The protein localises to the early endosome. The catalysed reaction is Thiol-dependent hydrolysis of ester, thioester, amide, peptide and isopeptide bonds formed by the C-terminal Gly of ubiquitin (a 76-residue protein attached to proteins as an intracellular targeting signal).. Its activity is regulated as follows. Specifically inhibited by spautin-1 (specific and potent autophagy inhibitor-1), a derivative of MBCQ that binds to USP10 and inhibits deubiquitinase activity. Regulated by PIK3C3/VPS34-containing complexes. Functionally, hydrolase that can remove conjugated ubiquitin from target proteins such as p53/TP53, RPS2/us5, RPS3/us3, RPS10/eS10, BECN1, SNX3 and CFTR. Acts as an essential regulator of p53/TP53 stability: in unstressed cells, specifically deubiquitinates p53/TP53 in the cytoplasm, leading to counteract MDM2 action and stabilize p53/TP53. Following DNA damage, translocates to the nucleus and deubiquitinates p53/TP53, leading to regulate the p53/TP53-dependent DNA damage response. Component of a regulatory loop that controls autophagy and p53/TP53 levels: mediates deubiquitination of BECN1, a key regulator of autophagy, leading to stabilize the PIK3C3/VPS34-containing complexes. In turn, PIK3C3/VPS34-containing complexes regulate USP10 stability, suggesting the existence of a regulatory system by which PIK3C3/VPS34-containing complexes regulate p53/TP53 protein levels via USP10 and USP13. Does not deubiquitinate MDM2. Plays a key role in 40S ribosome subunit recycling when a ribosome has stalled during translation: acts both by inhibiting formation of stress granules, which store stalled translation pre-initiation complexes, and mediating deubiquitination of 40S ribosome subunits. Acts as a negative regulator of stress granules formation by lowering G3BP1 and G3BP2 valence, thereby preventing G3BP1 and G3BP2 ability to undergo liquid-liquid phase separation (LLPS) and assembly of stress granules. Promotes 40S ribosome subunit recycling following ribosome dissociation in response to ribosome stalling by mediating deubiquitination of 40S ribosomal proteins RPS2/us5, RPS3/us3 and RPS10/eS10, thereby preventing their degradation by the proteasome. Part of a ribosome quality control that takes place when ribosomes have stalled during translation initiation (iRQC): USP10 acts by removing monoubiquitination of RPS2/us5 and RPS3/us3, promoting 40S ribosomal subunit recycling. Deubiquitinates CFTR in early endosomes, enhancing its endocytic recycling. Involved in a TANK-dependent negative feedback response to attenuate NF-kappa-B activation via deubiquitinating IKBKG or TRAF6 in response to interleukin-1-beta (IL1B) stimulation or upon DNA damage. Deubiquitinates TBX21 leading to its stabilization. Plays a negative role in the RLR signaling pathway upon RNA virus infection by blocking the RIGI-mediated MAVS activation. Mechanistically, removes the unanchored 'Lys-63'-linked polyubiquitin chains of MAVS to inhibit its aggregation, essential for its activation. This chain is Ubiquitin carboxyl-terminal hydrolase 10 (Usp10), found in Rattus norvegicus (Rat).